The primary structure comprises 74 residues: Anionic peptide clone 9 (74 aa).

Residues 1–24 form the signal peptide; sequence MVSKSLIVLLLVSVLVSTFFTTEA.

It belongs to the non-disulfide-bridged peptide (NDBP) superfamily. Long chain multifunctional peptide (group 2) family. Expressed by the venom gland.

It localises to the secreted. In terms of biological role, may be an antimicrobial peptide. This chain is Anionic peptide clone 9, found in Tityus costatus (Brazilian scorpion).